A 766-amino-acid polypeptide reads, in one-letter code: Pentatricopeptide repeat-containing protein At3g61520, mitochondrial (766 aa).

The N-terminal 30 residues, 1–30, are a transit peptide targeting the mitochondrion; sequence MSIMLSISRRRNSYILLNHSRFLRRFSYDV. PPR repeat units lie at residues 151–181, 184–218, 221–257, 258–292, 293–327, 328–358, 369–404, 405–439, 440–474, 475–509, 510–544, 545–579, 580–614, 615–650, 651–685, and 686–720; these read TVVA…LDSN, NSQV…ESVF, NRIT…GVSP, NSVW…KTPL, EAPP…KIRP, DVVT…MRGK, DSIH…RCAP, NAVT…EIKP, NVVT…GVKG, NVVT…GCSP, DAKI…GFSL, DLLA…GKKP, DSIT…GLDP, TVTT…KVNP, NTVI…MVRP, and NVET…SCEP.

Belongs to the PPR family. P subfamily.

The protein localises to the mitochondrion. The polypeptide is Pentatricopeptide repeat-containing protein At3g61520, mitochondrial (Arabidopsis thaliana (Mouse-ear cress)).